The following is a 94-amino-acid chain: Acylphosphatase (94 aa).

The 88-residue stretch at 3–90 folds into the Acylphosphatase-like domain; the sequence is RVHVIVEGRV…SDEKQFRIMY (88 aa). Residues R18 and N36 contribute to the active site.

Belongs to the acylphosphatase family.

The catalysed reaction is an acyl phosphate + H2O = a carboxylate + phosphate + H(+). The protein is Acylphosphatase (acyP) of Geobacillus kaustophilus (strain HTA426).